The chain runs to 393 residues: NAD(P)H-quinone oxidoreductase subunit H, chloroplastic (393 aa).

Belongs to the complex I 49 kDa subunit family. As to quaternary structure, NDH is composed of at least 16 different subunits, 5 of which are encoded in the nucleus.

The protein localises to the plastid. It is found in the chloroplast thylakoid membrane. It carries out the reaction a plastoquinone + NADH + (n+1) H(+)(in) = a plastoquinol + NAD(+) + n H(+)(out). The enzyme catalyses a plastoquinone + NADPH + (n+1) H(+)(in) = a plastoquinol + NADP(+) + n H(+)(out). Functionally, NDH shuttles electrons from NAD(P)H:plastoquinone, via FMN and iron-sulfur (Fe-S) centers, to quinones in the photosynthetic chain and possibly in a chloroplast respiratory chain. The immediate electron acceptor for the enzyme in this species is believed to be plastoquinone. Couples the redox reaction to proton translocation, and thus conserves the redox energy in a proton gradient. This Eucalyptus globulus subsp. globulus (Tasmanian blue gum) protein is NAD(P)H-quinone oxidoreductase subunit H, chloroplastic.